We begin with the raw amino-acid sequence, 230 residues long: Ribonuclease 3 (230 aa).

In terms of domain architecture, RNase III spans Thr-6–Lys-135. Residue Glu-48 participates in Mg(2+) binding. Asp-52 is a catalytic residue. Mg(2+)-binding residues include Asp-121 and Glu-124. The active site involves Glu-124. The DRBM domain occupies Asp-161 to Gln-230.

This sequence belongs to the ribonuclease III family. In terms of assembly, homodimer. Mg(2+) serves as cofactor.

The protein localises to the cytoplasm. The catalysed reaction is Endonucleolytic cleavage to 5'-phosphomonoester.. In terms of biological role, digests double-stranded RNA. Involved in the processing of primary rRNA transcript to yield the immediate precursors to the large and small rRNAs (23S and 16S). Processes some mRNAs, and tRNAs when they are encoded in the rRNA operon. Processes pre-crRNA and tracrRNA of type II CRISPR loci if present in the organism. This chain is Ribonuclease 3, found in Enterococcus faecalis (strain ATCC 700802 / V583).